A 760-amino-acid chain; its full sequence is ATP-dependent DNA helicase Hel308 (760 aa).

ATP contacts are provided by residues Gln28 and 46-53 (IPTASGKT). The Helicase ATP-binding domain maps to 33–199 (EMGLLEKKNL…WLGAALVLSE (167 aa)). The DEAH box motif lies at 144 to 147 (DEIH). Residues 232–426 (AVNLVLDTIK…SKLGTENALR (195 aa)) form the Helicase C-terminal domain.

This sequence belongs to the helicase family. Hel308 subfamily. Monomer.

It carries out the reaction Couples ATP hydrolysis with the unwinding of duplex DNA by translocating in the 3'-5' direction.. The enzyme catalyses ATP + H2O = ADP + phosphate + H(+). DNA-dependent ATPase and 3'-5' DNA helicase that may be involved in repair of stalled replication forks. The protein is ATP-dependent DNA helicase Hel308 of Methanococcoides burtonii (strain DSM 6242 / NBRC 107633 / OCM 468 / ACE-M).